Here is a 78-residue protein sequence, read N- to C-terminus: Major outer membrane lipoprotein Lpp (78 aa).

Positions 1-20 (MNRTKLVLGAVILASTMLAG) are cleaved as a signal peptide. A lipid anchor (N-palmitoyl cysteine) is attached at cysteine 21. Cysteine 21 carries S-diacylglycerol cysteine lipidation. 2 consecutive repeats follow at residues 24–34 (NAKIDQLSSDV) and 38–48 (NAKVDQLSNDV). The stretch at 27 to 75 (IDQLSSDVQTLNAKVDQLSNDVNAVRADVQAAKDDAARANQRLDNQAQA) forms a coiled coil. The residue at position 78 (lysine 78) is an N6-murein peptidoglycan lysine.

The protein belongs to the Lpp family. As to quaternary structure, homotrimer.

The protein localises to the cell outer membrane. Its subcellular location is the secreted. It localises to the cell wall. Functionally, a highly abundant outer membrane lipoprotein that controls the distance between the inner and outer membranes. The only protein known to be covalently linked to the peptidoglycan network (PGN). Also non-covalently binds the PGN. The link between the cell outer membrane and PGN contributes to maintenance of the structural and functional integrity of the cell envelope, and maintains the correct distance between the PGN and the outer membrane. This Yersinia pestis protein is Major outer membrane lipoprotein Lpp.